The chain runs to 564 residues: Diacylglycerol kinase epsilon (564 aa).

Residues 20–40 form a helical membrane-spanning segment; sequence LVLWTLCSVLLPVFITLWCSL. 2 consecutive Phorbol-ester/DAG-type zinc fingers follow at residues 57 to 106 and 121 to 174; these read KHCW…RFPC and PHHW…SEKC. The DAGKc domain maps to 212–353; sequence KQWTPLIILA…LDRWKVQVTN (142 aa).

Belongs to the eukaryotic diacylglycerol kinase family. As to expression, highly expressed in brain and heart. In brain, highly expressed in Purkinje cells of the cerebellum, pyramidal cells of the hippocampus, mitral cells of the olfactory bulb, and neurons of the substantia nigra. Lower expression in neurons of the thalamus, superior olive, and lateral reticular nucleus is also detected. Expressed in platelets.

Its subcellular location is the membrane. The protein resides in the cytoplasm. It catalyses the reaction a 1,2-diacyl-sn-glycerol + ATP = a 1,2-diacyl-sn-glycero-3-phosphate + ADP + H(+). The catalysed reaction is 1-hexadecanoyl-2-(5Z,8Z,11Z,14Z-eicosatetraenoyl)-sn-glycerol + ATP = 1-hexadecanoyl-2-(5Z,8Z,11Z,14Z-eicosatetraenoyl)-sn-glycero-3-phosphate + ADP + H(+). It carries out the reaction 1-octadecanoyl-2-(5Z,8Z,11Z,14Z-eicosatetraenoyl)-sn-glycerol + ATP = 1-octadecanoyl-2-(5Z,8Z,11Z,14Z-eicosatetraenoyl)-sn-glycero-3-phosphate + ADP + H(+). The enzyme catalyses 1-eicosanoyl-2-(5Z,8Z,11Z,14Z)-eicosatetraenoyl-sn-glycerol + ATP = 1-eicosanoyl-2-(5Z,8Z,11Z,14Z)-eicosatetraenoyl-sn-glycero-3-phosphate + ADP + H(+). It catalyses the reaction 1,2-di-(5Z,8Z,11Z,14Z)-eicosatetraenoyl-sn-glycerol + ATP = 1,2-di-(5Z,8Z,11Z,14Z)-eicosatetraenoyl-sn-glycero-3-phosphate + ADP + H(+). The catalysed reaction is 1-octadecanoyl-2-(9Z,12Z)-octadecadienoyl-sn-glycerol + ATP = 1-octadecanoyl-2-(9Z,12Z-octadecadienoyl)-sn-glycero-3-phosphate + ADP + H(+). It carries out the reaction 1,2-di-(9Z,12Z-octadecadienoyl)-sn-glycerol + ATP = 1,2-di-(9Z,12Z-octadecadienoyl)-sn-glycero-3-phosphate + ADP + H(+). The enzyme catalyses 1,2-di-(9Z-octadecenoyl)-sn-glycerol + ATP = 1,2-di-(9Z-octadecenoyl)-sn-glycero-3-phosphate + ADP + H(+). Its pathway is lipid metabolism; glycerolipid metabolism. Functionally, membrane-bound diacylglycerol kinase that converts diacylglycerol/DAG into phosphatidic acid/phosphatidate/PA and regulates the respective levels of these two bioactive lipids. Thereby, acts as a central switch between the signaling pathways activated by these second messengers with different cellular targets and opposite effects in numerous biological processes. Also plays an important role in the biosynthesis of complex lipids. Displays specificity for diacylglycerol substrates with an arachidonoyl acyl chain at the sn-2 position, with the highest activity toward 1-octadecanoyl-2-(5Z,8Z,11Z,14Z-eicosatetraenoyl)-sn-glycerol the main diacylglycerol intermediate within the phosphatidylinositol turnover cycle. Can also phosphorylate diacylglycerol substrates with a linoleoyl acyl chain at the sn-2 position but much less efficiently. This chain is Diacylglycerol kinase epsilon (Dgke), found in Mus musculus (Mouse).